Consider the following 162-residue polypeptide: Small ribosomal subunit protein uS12m (162 aa).

Residues 1–37 constitute a mitochondrion transit peptide; that stretch reads MIRFAQYARYPVISRLMKPTVISPFQAQAFSSSSVML.

It belongs to the universal ribosomal protein uS12 family. In terms of assembly, component of the mitochondrial small ribosomal subunit (mt-SSU). Mature yeast 74S mitochondrial ribosomes consist of a small (37S) and a large (54S) subunit. The 37S small subunit contains a 15S ribosomal RNA (15S mt-rRNA) and at least 32 different proteins. The 54S large subunit contains a 21S rRNA (21S mt-rRNA) and at least 45 different proteins. uS12m forms part of the decoding center of the mt-SSU.

The protein resides in the mitochondrion. In terms of biological role, component of the mitochondrial ribosome (mitoribosome), a dedicated translation machinery responsible for the synthesis of mitochondrial genome-encoded proteins, including at least some of the essential transmembrane subunits of the mitochondrial respiratory chain. The mitoribosomes are attached to the mitochondrial inner membrane and translation products are cotranslationally integrated into the membrane. uS12m is required for respiratory growth. The polypeptide is Small ribosomal subunit protein uS12m (Schizosaccharomyces pombe (strain 972 / ATCC 24843) (Fission yeast)).